The primary structure comprises 399 residues: S-adenosylmethionine synthase (399 aa).

Residue H17 participates in ATP binding. D19 contributes to the Mg(2+) binding site. K(+) is bound at residue E45. L-methionine contacts are provided by E58 and Q101. Residues 101 to 111 (QSPDIAQGVDE) are flexible loop. ATP contacts are provided by residues 177-179 (DAK), 244-245 (RF), D253, 259-260 (RK), A276, and K280. Residue D253 coordinates L-methionine. K284 lines the L-methionine pocket.

The protein belongs to the AdoMet synthase family. As to quaternary structure, homotetramer; dimer of dimers. The cofactor is Mg(2+). Requires K(+) as cofactor.

It localises to the cytoplasm. The catalysed reaction is L-methionine + ATP + H2O = S-adenosyl-L-methionine + phosphate + diphosphate. The protein operates within amino-acid biosynthesis; S-adenosyl-L-methionine biosynthesis; S-adenosyl-L-methionine from L-methionine: step 1/1. In terms of biological role, catalyzes the formation of S-adenosylmethionine (AdoMet) from methionine and ATP. The overall synthetic reaction is composed of two sequential steps, AdoMet formation and the subsequent tripolyphosphate hydrolysis which occurs prior to release of AdoMet from the enzyme. The sequence is that of S-adenosylmethionine synthase from Listeria monocytogenes serovar 1/2a (strain ATCC BAA-679 / EGD-e).